We begin with the raw amino-acid sequence, 235 residues long: Large ribosomal subunit protein uL1 (235 aa).

The protein belongs to the universal ribosomal protein uL1 family. In terms of assembly, part of the 50S ribosomal subunit.

Binds directly to 23S rRNA. The L1 stalk is quite mobile in the ribosome, and is involved in E site tRNA release. Its function is as follows. Protein L1 is also a translational repressor protein, it controls the translation of the L11 operon by binding to its mRNA. The sequence is that of Large ribosomal subunit protein uL1 from Desulfovibrio desulfuricans (strain ATCC 27774 / DSM 6949 / MB).